Here is a 427-residue protein sequence, read N- to C-terminus: Phosphatidate cytidylyltransferase, mitochondrial (427 aa).

Positions 94 to 106 (YNRNGDGSTSTEN) are enriched in polar residues. Residues 94–113 (YNRNGDGSTSTENPSKKEEQ) are disordered.

This sequence belongs to the TAM41 family. Mg(2+) serves as cofactor.

It is found in the mitochondrion inner membrane. It catalyses the reaction a 1,2-diacyl-sn-glycero-3-phosphate + CTP + H(+) = a CDP-1,2-diacyl-sn-glycerol + diphosphate. It functions in the pathway phospholipid metabolism; CDP-diacylglycerol biosynthesis; CDP-diacylglycerol from sn-glycerol 3-phosphate: step 3/3. In terms of biological role, catalyzes the formation of CDP-diacylglycerol (CDP-DAG) from phosphatidic acid (PA) in the mitochondrial inner membrane. Required for the biosynthesis of the dimeric phospholipid cardiolipin, which stabilizes supercomplexes of the mitochondrial respiratory chain in the mitochondrial inner membrane. This Dictyostelium discoideum (Social amoeba) protein is Phosphatidate cytidylyltransferase, mitochondrial.